We begin with the raw amino-acid sequence, 549 residues long: Speedy protein E3 (549 aa).

Residues 1–15 are compositionally biased toward low complexity; the sequence is MTSHQPQPQEEQSPQ. 5 disordered regions span residues 1–74, 126–145, 188–218, 261–291, and 334–364; these read MTSH…EPEE, KRECLDESDDEPEKELAPEP, and SPPRRSLGCKRKRECLDESDDEPEKELAPEP. 5 stretches are compositionally biased toward acidic residues: residues 58–74, 131–145, 204–218, 277–291, and 350–364; these read DESDDEPEKELAPEPEE and DESDDEPEKELAPEP.

This sequence belongs to the Speedy/Ringo family. In terms of tissue distribution, predominantly expressed in testis and spleen.

The polypeptide is Speedy protein E3 (Homo sapiens (Human)).